Here is a 530-residue protein sequence, read N- to C-terminus: Phosphoenolpyruvate carboxykinase (ATP) (530 aa).

Positions 58, 195, and 201 each coordinate substrate. ATP contacts are provided by residues Lys201, His220, and 236 to 244; that span reads GLSGTGKTT. Mn(2+)-binding residues include Lys201 and His220. Mn(2+) is bound at residue Asp257. Residues Glu285, Arg321, 440–441, and Thr446 contribute to the ATP site; that span reads RI. Residue Arg321 participates in substrate binding.

This sequence belongs to the phosphoenolpyruvate carboxykinase (ATP) family. It depends on Mn(2+) as a cofactor.

It is found in the cytoplasm. The enzyme catalyses oxaloacetate + ATP = phosphoenolpyruvate + ADP + CO2. Its pathway is carbohydrate biosynthesis; gluconeogenesis. In terms of biological role, involved in the gluconeogenesis. Catalyzes the conversion of oxaloacetate (OAA) to phosphoenolpyruvate (PEP) through direct phosphoryl transfer between the nucleoside triphosphate and OAA. The polypeptide is Phosphoenolpyruvate carboxykinase (ATP) (Staphylococcus aureus (strain bovine RF122 / ET3-1)).